We begin with the raw amino-acid sequence, 288 residues long: UTP--glucose-1-phosphate uridylyltransferase (288 aa).

Belongs to the UDPGP type 2 family.

The catalysed reaction is alpha-D-glucose 1-phosphate + UTP + H(+) = UDP-alpha-D-glucose + diphosphate. It participates in glycolipid metabolism; diglucosyl-diacylglycerol biosynthesis. In terms of biological role, catalyzes the formation of UDP-glucose from glucose-1-phosphate and UTP. This is an intermediate step in the biosynthesis of diglucosyl-diacylglycerol (Glc2-DAG), i.e. a glycolipid found in the membrane, which is also used as a membrane anchor for lipoteichoic acid (LTA). The protein is UTP--glucose-1-phosphate uridylyltransferase (gtaB) of Staphylococcus epidermidis (strain ATCC 35984 / DSM 28319 / BCRC 17069 / CCUG 31568 / BM 3577 / RP62A).